The chain runs to 681 residues: PTS system glucose-specific EIICBA component (681 aa).

The 412-residue stretch at 3–414 (KKLFGQLQRI…LKYKTPGRED (412 aa)) folds into the PTS EIIC type-1 domain. 10 helical membrane passes run 16–36 (LMLP…GTAM), 73–93 (MIFA…AAIA), 126–146 (ILGI…GALA), 170–190 (FVPI…ALIW), 199–219 (AFST…FGFI), 273–293 (FMQG…LAIY), 303–323 (VVAG…ITEP), 328–348 (FLFV…LSFL), 355–375 (LHLG…GILP), and 383–403 (VIPV…FLIV). The region spanning 425–506 (TELPYAVLEA…QQIMNGQVVE (82 aa)) is the PTS EIIB type-1 domain. Cys-447 (phosphocysteine intermediate; for EIIB activity) is an active-site residue. The PTS EIIA type-1 domain occupies 551–655 (DQVFSEKMMG…SDITPIIVTQ (105 aa)). His-603 functions as the Tele-phosphohistidine intermediate; for EIIA activity in the catalytic mechanism.

The protein localises to the cell membrane. It catalyses the reaction N(pros)-phospho-L-histidyl-[protein] + D-glucose(out) = D-glucose 6-phosphate(in) + L-histidyl-[protein]. Functionally, the phosphoenolpyruvate-dependent sugar phosphotransferase system (sugar PTS), a major carbohydrate active transport system, catalyzes the phosphorylation of incoming sugar substrates concomitantly with their translocation across the cell membrane. This system is involved in glucose transport. The chain is PTS system glucose-specific EIICBA component (ptsG) from Staphylococcus aureus (strain bovine RF122 / ET3-1).